The sequence spans 288 residues: Shikimate dehydrogenase (NADP(+)) (288 aa).

Shikimate contacts are provided by residues 15–17 (SKS) and Thr64. The Proton acceptor role is filled by Lys68. An NADP(+)-binding site is contributed by Glu83. Shikimate-binding residues include Asn92 and Asp117. NADP(+)-binding positions include 141-145 (GAGGA), 165-170 (NRTVSK), and Met232. Tyr234 is a binding site for shikimate. Position 254 (Gly254) interacts with NADP(+).

The protein belongs to the shikimate dehydrogenase family. As to quaternary structure, homodimer.

The catalysed reaction is shikimate + NADP(+) = 3-dehydroshikimate + NADPH + H(+). Its pathway is metabolic intermediate biosynthesis; chorismate biosynthesis; chorismate from D-erythrose 4-phosphate and phosphoenolpyruvate: step 4/7. Functionally, involved in the biosynthesis of the chorismate, which leads to the biosynthesis of aromatic amino acids. Catalyzes the reversible NADPH linked reduction of 3-dehydroshikimate (DHSA) to yield shikimate (SA). This Psychrobacter cryohalolentis (strain ATCC BAA-1226 / DSM 17306 / VKM B-2378 / K5) protein is Shikimate dehydrogenase (NADP(+)).